The following is a 301-amino-acid chain: Porin (301 aa).

Homotrimer.

It localises to the cell outer membrane. In terms of biological role, forms channels that allow the passive diffusion of small hydrophilic solutes up to an exclusion limit of about 0.6 kDa. This Rhodobacter capsulatus (Rhodopseudomonas capsulata) protein is Porin.